The following is a 323-amino-acid chain: tRNA dimethylallyltransferase (323 aa).

Residue 12 to 19 (GPTAAGKT) coordinates ATP. 14 to 19 (TAAGKT) contributes to the substrate binding site. Interaction with substrate tRNA regions lie at residues 37 to 40 (DSAL) and 161 to 165 (QRLSR).

It belongs to the IPP transferase family. Monomer. Mg(2+) serves as cofactor.

It catalyses the reaction adenosine(37) in tRNA + dimethylallyl diphosphate = N(6)-dimethylallyladenosine(37) in tRNA + diphosphate. In terms of biological role, catalyzes the transfer of a dimethylallyl group onto the adenine at position 37 in tRNAs that read codons beginning with uridine, leading to the formation of N6-(dimethylallyl)adenosine (i(6)A). This Pseudomonas fluorescens (strain SBW25) protein is tRNA dimethylallyltransferase.